Reading from the N-terminus, the 529-residue chain is Delayed-rectifier potassium channel regulatory subunit KCNS1 (529 aa).

The Cytoplasmic segment spans residues 1–217 (MLMLLVRGTH…LTMENPGYSL (217 aa)). The helical transmembrane segment at 218 to 239 (PSKLFSCVSISVVLASIAAMCI) threads the bilayer. Residues 240–270 (HSLPEYQAREAAAAVAAVAAGRSPEGVRDDP) are Extracellular-facing. Residues 271 to 293 (VLRRLEYFCIAWFSFEVSSRLLL) traverse the membrane as a helical segment. Residues 294–304 (APSTRNFFCHP) lie on the Cytoplasmic side of the membrane. A helical transmembrane segment spans residues 305–322 (LNLIDIVSVLPFYLTLLA). Residues 323–340 (GVALGDQGGTGGKELGHL) are Extracellular-facing. The helical; Voltage-sensor transmembrane segment at 341–361 (GKVVQVFRLMRIFRVLKLARH) threads the bilayer. Topologically, residues 362–376 (STGLRSLGATLKHSY) are cytoplasmic. The chain crosses the membrane as a helical span at residues 377 to 398 (REVGILLLYLAVGVSVFSGVAY). At 399–411 (TAEKEEDVGFNTI) the chain is on the extracellular side. The segment at residues 412-423 (PACWWWGTVSMT) is an intramembrane region (helical). A Selectivity filter motif is present at residues 424-429 (TVGYGD). Residues 424 to 431 (TVGYGDVV) lie within the membrane without spanning it. The Extracellular segment spans residues 432–438 (PVTVAGK). Residues 439–467 (LAASGCILGGILVVALPITIIFNKFSHFY) form a helical membrane-spanning segment. Over 468–529 (RRQKALEAAV…PSEPPHPQMY (62 aa)) the chain is Cytoplasmic. The tract at residues 494-529 (GVSEASLETSRETSQEGRSADLETQAPSEPPHPQMY) is disordered. Residues 502–514 (TSRETSQEGRSAD) are compositionally biased toward basic and acidic residues.

This sequence belongs to the potassium channel family. S (TC 1.A.1.2) subfamily. Kv9.1/KCNS1 sub-subfamily. In terms of assembly, heterotetramer with KCNB1. Heterotetramer with KCNB2. Does not form homomultimers.

It is found in the cell membrane. Functionally, potassium channel regulatory subunit that modulate the delayed rectifier voltage-gated potassium channel activity of KCNB1 and KCNB2 by altering their kinetics, expression levels, and shifting the half-inactivation potential to more polarized values. While it does not form functional channels on its own, it can form functional heterotetrameric channels with KCNB1 and KCNB2. Each regulatory subunit has unique regulatory properties that can lead to extensive inhibition, significant changes in kinetics, and/or substantial shifts in the voltage dependencies of the inactivation process. The sequence is that of Delayed-rectifier potassium channel regulatory subunit KCNS1 from Chlorocebus aethiops (Green monkey).